Consider the following 51-residue polypeptide: Micropeptide inhibiting actin cytoskeleton (51 aa).

The interval 1–22 (MERAGVPGFSPRRSSVEAKMQS) is disordered.

As to quaternary structure, interacts with aquaporin AQP2.

Reduces filamentous actin fibers by interacting with aquaporin AQP2 which leads to inhibition of the expression of SEPTIN4 and integrin ITGB4. Also inhibits the activation of the EREG/EGFR signaling pathway through interaction with AQP2. The chain is Micropeptide inhibiting actin cytoskeleton from Homo sapiens (Human).